The chain runs to 266 residues: Tryptophan synthase alpha chain (266 aa).

Catalysis depends on proton acceptor residues Glu-46 and Asp-57.

It belongs to the TrpA family. In terms of assembly, tetramer of two alpha and two beta chains.

The enzyme catalyses (1S,2R)-1-C-(indol-3-yl)glycerol 3-phosphate + L-serine = D-glyceraldehyde 3-phosphate + L-tryptophan + H2O. Its pathway is amino-acid biosynthesis; L-tryptophan biosynthesis; L-tryptophan from chorismate: step 5/5. Its function is as follows. The alpha subunit is responsible for the aldol cleavage of indoleglycerol phosphate to indole and glyceraldehyde 3-phosphate. The sequence is that of Tryptophan synthase alpha chain from Lacticaseibacillus casei (Lactobacillus casei).